Consider the following 124-residue polypeptide: UPF0102 protein Rcas_2007 (124 aa).

This sequence belongs to the UPF0102 family.

This Roseiflexus castenholzii (strain DSM 13941 / HLO8) protein is UPF0102 protein Rcas_2007.